The sequence spans 178 residues: ATP-dependent protease subunit HslV (178 aa).

Residue Thr-7 is part of the active site. Positions 162, 165, and 168 each coordinate Na(+).

This sequence belongs to the peptidase T1B family. HslV subfamily. A double ring-shaped homohexamer of HslV is capped on each side by a ring-shaped HslU homohexamer. The assembly of the HslU/HslV complex is dependent on binding of ATP.

It localises to the cytoplasm. The catalysed reaction is ATP-dependent cleavage of peptide bonds with broad specificity.. Allosterically activated by HslU binding. Protease subunit of a proteasome-like degradation complex believed to be a general protein degrading machinery. The sequence is that of ATP-dependent protease subunit HslV from Janthinobacterium sp. (strain Marseille) (Minibacterium massiliensis).